The chain runs to 839 residues: Elongation factor 2 (839 aa).

A tr-type G domain is found at 17 to 248 (ENIRNMSVIA…MGRLWGDSYF (232 aa)). GTP-binding positions include 26 to 33 (AHVDHGKT), 156 to 159 (NKVD), and 211 to 213 (SGL). A Diphthamide modification is found at H698.

It belongs to the TRAFAC class translation factor GTPase superfamily. Classic translation factor GTPase family. EF-G/EF-2 subfamily. Post-translationally, phosphorylation by EF-2 kinase completely inactivates EF-2.

It is found in the cytoplasm. It carries out the reaction GTP + H2O = GDP + phosphate + H(+). In terms of biological role, catalyzes the GTP-dependent ribosomal translocation step during translation elongation. During this step, the ribosome changes from the pre-translocational (PRE) to the post-translocational (POST) state as the newly formed A-site-bound peptidyl-tRNA and P-site-bound deacylated tRNA move to the P and E sites, respectively. Catalyzes the coordinated movement of the two tRNA molecules, the mRNA and conformational changes in the ribosome. This chain is Elongation factor 2 (efbA), found in Dictyostelium discoideum (Social amoeba).